We begin with the raw amino-acid sequence, 226 residues long: 2,3-bisphosphoglycerate-dependent phosphoglycerate mutase (226 aa).

Residues 8-15 (RHGQSQWN), 21-22 (TG), Arg58, 112-115 (ERMY), Lys123, 139-140 (RR), and 183-184 (GN) contribute to the substrate site. His9 acts as the Tele-phosphohistidine intermediate in catalysis. Residue Glu112 is the Proton donor/acceptor of the active site.

Belongs to the phosphoglycerate mutase family. BPG-dependent PGAM subfamily.

The catalysed reaction is (2R)-2-phosphoglycerate = (2R)-3-phosphoglycerate. Its pathway is carbohydrate degradation; glycolysis; pyruvate from D-glyceraldehyde 3-phosphate: step 3/5. Its function is as follows. Catalyzes the interconversion of 2-phosphoglycerate and 3-phosphoglycerate. The sequence is that of 2,3-bisphosphoglycerate-dependent phosphoglycerate mutase from Protochlamydia amoebophila (strain UWE25).